A 57-amino-acid polypeptide reads, in one-letter code: uncharacterized protein (57 aa).

It belongs to the ycf18/nblA family.

The protein resides in the plastid. It is found in the chloroplast. This is an uncharacterized protein from Aglaothamnion neglectum (Red alga).